Consider the following 898-residue polypeptide: DNA-directed DNA polymerase (898 aa).

The tract at residues 101–337 (YDRKFVRVAN…VQAIDKIRGF (237 aa)) is 3'-5'exonuclease. 3 residues coordinate Mg(2+): D112, E114, and D219. The tract at residues 245–261 (VKSKLIQNMYGSKEIYS) is beta hairpin. Mg(2+) contacts are provided by D324, D408, and L409. The polymerase stretch occupies residues 377–898 (IPQQGSHVKQ…EKASLDFLFG (522 aa)). Substrate-binding positions include 411-413 (SLY), R479, and K557. D620 lines the Mg(2+) pocket. A binding of DNA in B-conformation region spans residues 702 to 705 (KKRY). An interaction with the polymerase clamp region spans residues 893-898 (LDFLFG).

This sequence belongs to the DNA polymerase type-B family. As to quaternary structure, interacts with the polymerase clamp; this interaction constitutes the polymerase holoenzyme. Interacts with the helicase assembly factor. Part of the replicase complex that includes the DNA polymerase, the polymerase clamp, the clamp loader complex, the single-stranded DNA binding protein, the primase, the helicase and the helicase assembly factor. The cofactor is Mg(2+).

The enzyme catalyses DNA(n) + a 2'-deoxyribonucleoside 5'-triphosphate = DNA(n+1) + diphosphate. Its function is as follows. Replicates the viral genomic DNA. This polymerase possesses two enzymatic activities: DNA synthesis (polymerase) and an exonucleolytic activity that degrades single-stranded DNA in the 3'- to 5'-direction for proofreading purpose. This Enterobacteria phage T4 (Bacteriophage T4) protein is DNA-directed DNA polymerase (43).